The chain runs to 338 residues: Ketol-acid reductoisomerase (NADP(+)) (338 aa).

One can recognise a KARI N-terminal Rossmann domain in the interval 1-181; sequence MKVYYDKDAD…GGTKGGVIET (181 aa). Residues 24-27, Arg-47, Ser-52, and 82-85 contribute to the NADP(+) site; these read YGSQ and DETQ. The active site involves His-107. NADP(+) is bound at residue Gly-133. The region spanning 182–327 is the KARI C-terminal knotted domain; that stretch reads SFREETETDL…AELRAMMPWI (146 aa). Mg(2+)-binding residues include Asp-190, Glu-194, Glu-226, and Glu-230. Position 251 (Ser-251) interacts with substrate.

Belongs to the ketol-acid reductoisomerase family. Requires Mg(2+) as cofactor.

It carries out the reaction (2R)-2,3-dihydroxy-3-methylbutanoate + NADP(+) = (2S)-2-acetolactate + NADPH + H(+). It catalyses the reaction (2R,3R)-2,3-dihydroxy-3-methylpentanoate + NADP(+) = (S)-2-ethyl-2-hydroxy-3-oxobutanoate + NADPH + H(+). Its pathway is amino-acid biosynthesis; L-isoleucine biosynthesis; L-isoleucine from 2-oxobutanoate: step 2/4. It participates in amino-acid biosynthesis; L-valine biosynthesis; L-valine from pyruvate: step 2/4. In terms of biological role, involved in the biosynthesis of branched-chain amino acids (BCAA). Catalyzes an alkyl-migration followed by a ketol-acid reduction of (S)-2-acetolactate (S2AL) to yield (R)-2,3-dihydroxy-isovalerate. In the isomerase reaction, S2AL is rearranged via a Mg-dependent methyl migration to produce 3-hydroxy-3-methyl-2-ketobutyrate (HMKB). In the reductase reaction, this 2-ketoacid undergoes a metal-dependent reduction by NADPH to yield (R)-2,3-dihydroxy-isovalerate. The chain is Ketol-acid reductoisomerase (NADP(+)) from Laribacter hongkongensis (strain HLHK9).